Here is a 58-residue protein sequence, read N- to C-terminus: Small ribosomal subunit protein bS21 (58 aa).

Residues 36 to 58 form a disordered region; it reads EHYEKPSVKRKKKSEAARKRKFK. Residues 43–58 are compositionally biased toward basic residues; the sequence is VKRKKKSEAARKRKFK.

It belongs to the bacterial ribosomal protein bS21 family.

In Clostridium kluyveri (strain NBRC 12016), this protein is Small ribosomal subunit protein bS21.